Here is a 421-residue protein sequence, read N- to C-terminus: 5-methylthioadenosine/S-adenosylhomocysteine deaminase (421 aa).

Zn(2+) is bound by residues H60 and H62. Substrate is bound by residues E89 and H181. H208 contributes to the Zn(2+) binding site. Residues E211 and D296 each contribute to the substrate site. D296 serves as a coordination point for Zn(2+).

It belongs to the metallo-dependent hydrolases superfamily. MTA/SAH deaminase family. It depends on Zn(2+) as a cofactor.

The enzyme catalyses S-adenosyl-L-homocysteine + H2O + H(+) = S-inosyl-L-homocysteine + NH4(+). It carries out the reaction S-methyl-5'-thioadenosine + H2O + H(+) = S-methyl-5'-thioinosine + NH4(+). Catalyzes the deamination of 5-methylthioadenosine and S-adenosyl-L-homocysteine into 5-methylthioinosine and S-inosyl-L-homocysteine, respectively. Is also able to deaminate adenosine. The sequence is that of 5-methylthioadenosine/S-adenosylhomocysteine deaminase from Pyrococcus horikoshii (strain ATCC 700860 / DSM 12428 / JCM 9974 / NBRC 100139 / OT-3).